The following is a 535-amino-acid chain: Glutamate--cysteine ligase (535 aa).

Belongs to the glutamate--cysteine ligase type 1 family. Type 1 subfamily.

The catalysed reaction is L-cysteine + L-glutamate + ATP = gamma-L-glutamyl-L-cysteine + ADP + phosphate + H(+). Its pathway is sulfur metabolism; glutathione biosynthesis; glutathione from L-cysteine and L-glutamate: step 1/2. This chain is Glutamate--cysteine ligase, found in Pseudomonas savastanoi pv. phaseolicola (strain 1448A / Race 6) (Pseudomonas syringae pv. phaseolicola (strain 1448A / Race 6)).